A 1187-amino-acid chain; its full sequence is Phospholipid-transporting ATPase IH (1187 aa).

The Cytoplasmic portion of the chain corresponds to 1–61 (MDCSLLRTLV…SSKYTFWNFI (61 aa)). The helical transmembrane segment at 62-82 (PKNLFEQFRRIANFYFLIIFL) threads the bilayer. Topologically, residues 83–88 (VQLIID) are extracellular. Residues 89 to 110 (TPTSPVTSGLPLFFVITVTAIK) form a helical membrane-spanning segment. The Cytoplasmic portion of the chain corresponds to 111–296 (QGYEDWLRHK…SAVEKSMNTF (186 aa)). The chain crosses the membrane as a helical span at residues 297–318 (LIVYLCILVSKALINTVLKYVW). Topologically, residues 319-349 (QSEPFRDEPWYNEKTESERQRNLFLRAFTDF) are extracellular. The helical transmembrane segment at 350 to 372 (LAFMVLFNYIIPVSMYVTVEMQK) threads the bilayer. Residues 373–884 (FLGSYFITWD…GHFYYIRISE (512 aa)) lie on the Cytoplasmic side of the membrane. Aspartate 414 functions as the 4-aspartylphosphate intermediate in the catalytic mechanism. 10 residues coordinate ATP: aspartate 414, lysine 415, threonine 416, glutamate 513, phenylalanine 555, lysine 578, arginine 609, threonine 689, glycine 690, and aspartate 691. Aspartate 414 contributes to the Mg(2+) binding site. Threonine 416 is a Mg(2+) binding site. Phosphoserine is present on serine 740. Residues arginine 801 and lysine 807 each contribute to the ATP site. Position 828 (aspartate 828) interacts with Mg(2+). 2 residues coordinate ATP: asparagine 831 and aspartate 832. Position 832 (aspartate 832) interacts with Mg(2+). The chain crosses the membrane as a helical span at residues 885-905 (LVQYFFYKNVCFIFPQFLYQF). The Extracellular segment spans residues 906–917 (FCGFSQQTLYDT). Residues 918–937 (AYLTLYNISFTSLPILLYSL) form a helical membrane-spanning segment. Residues 938–967 (MEQHVGIDVLKRDPTLYRDIAKNALLRWRV) lie on the Cytoplasmic side of the membrane. Residues 968 to 989 (FIYWTFLGVFDALVFFFGAYFI) form a helical membrane-spanning segment. Residues 990 to 1003 (FENTTVTINGQMFG) lie on the Extracellular side of the membrane. The chain crosses the membrane as a helical span at residues 1004–1026 (NWTFGTLVFTVMVLTVTLKLALD). At 1027-1032 (THYWTW) the chain is on the cytoplasmic side. The chain crosses the membrane as a helical span at residues 1033 to 1053 (INHFVIWGSLLFYIAFSLLWG). Over 1054-1071 (GVIWPFLSYQRMYYVFIS) the chain is Extracellular. A helical membrane pass occupies residues 1072 to 1096 (MLSSGPAWLGIILLVTVGLLPDVLK). Residues 1097-1138 (KVLCRQLWPTATERTQNIQHQDSISEFTPLASLPSWGAQGSR) lie on the Cytoplasmic side of the membrane. Residues serine 1148 and serine 1158 each carry the phosphoserine modification.

It belongs to the cation transport ATPase (P-type) (TC 3.A.3) family. Type IV subfamily. In terms of assembly, component of a P4-ATPase flippase complex which consists of a catalytic alpha subunit ATP11A and an accessory beta subunit TMEM30A. It depends on Mg(2+) as a cofactor. In terms of processing, proteolytically cleaved by CASP3. In terms of tissue distribution, widely expressed. Expressed in myoblasts. Expressed in retina, brain, liver, testes and kidney (at protein level). Expressed in the inner ear.

It localises to the cell membrane. Its subcellular location is the early endosome. The protein localises to the recycling endosome. It is found in the endoplasmic reticulum membrane. It carries out the reaction ATP + H2O + phospholipidSide 1 = ADP + phosphate + phospholipidSide 2.. The enzyme catalyses a 1,2-diacyl-sn-glycero-3-phospho-L-serine(out) + ATP + H2O = a 1,2-diacyl-sn-glycero-3-phospho-L-serine(in) + ADP + phosphate + H(+). The catalysed reaction is a 1,2-diacyl-sn-glycero-3-phosphoethanolamine(out) + ATP + H2O = a 1,2-diacyl-sn-glycero-3-phosphoethanolamine(in) + ADP + phosphate + H(+). Its function is as follows. Catalytic component of a P4-ATPase flippase complex which catalyzes the hydrolysis of ATP coupled to the transport of aminophospholipids, phosphatidylserines (PS) and phosphatidylethanolamines (PE), from the outer to the inner leaflet of the plasma membrane. Does not show flippase activity toward phosphatidylcholine (PC). Contributes to the maintenance of membrane lipid asymmetry with a specific role in morphogenesis of muscle cells. In myoblasts, mediates PS enrichment at the inner leaflet of plasma membrane, triggering PIEZO1-dependent Ca2+ influx and Rho GTPases signal transduction, subsequently leading to the assembly of cortical actomyosin fibers and myotube formation. In Mus musculus (Mouse), this protein is Phospholipid-transporting ATPase IH (Atp11a).